Here is a 350-residue protein sequence, read N- to C-terminus: MKVKAPGRINIIGEHTDYNDGYVLPFAVNRYVFLSIEGSDRFIFHSENVNETVEMEKIEKLNKWTDYISGVIASFEKRGYRVSPVKISVSSNLPMGAGLSSSAALEVATAYAISEYFSFNVPKLELVKIAREAEVEFVGVRCGIMDQFTSAFGKKDHAIFLDTMTLEYEYVPLRLEGYEINLVDSNVKHELSSSEYNKRRQECEEVLKTLGKKSFREVTKEDLERLSGTLRKRAQHVLEENERVLKSVQALKEGDFETLGKLLFSSHESLRDLYEVSCEETDFIVDYLRGKEGILGARMVGGGFGGGVIVLSKKGAFGKIKEELVESYKKHFGIDLTFHEIESSDGVQKI.

Position 14-17 (14-17 (EHTD)) interacts with substrate. Residues S46 and 96–102 (GAGLSSS) each bind ATP. Residues S102 and E134 each contribute to the Mg(2+) site. D146 (proton acceptor) is an active-site residue. A substrate-binding site is contributed by Y196.

This sequence belongs to the GHMP kinase family. GalK subfamily.

The protein localises to the cytoplasm. The catalysed reaction is alpha-D-galactose + ATP = alpha-D-galactose 1-phosphate + ADP + H(+). The protein operates within carbohydrate metabolism; galactose metabolism. Functionally, catalyzes the transfer of the gamma-phosphate of ATP to D-galactose to form alpha-D-galactose-1-phosphate (Gal-1-P). The sequence is that of Galactokinase from Thermotoga petrophila (strain ATCC BAA-488 / DSM 13995 / JCM 10881 / RKU-1).